A 37-amino-acid polypeptide reads, in one-letter code: Cytochrome b6-f complex subunit 5 (37 aa).

A helical membrane pass occupies residues 5 to 25 (FLFGIVLGLIPVTLAGLFVTA).

The protein belongs to the PetG family. In terms of assembly, the 4 large subunits of the cytochrome b6-f complex are cytochrome b6, subunit IV (17 kDa polypeptide, PetD), cytochrome f and the Rieske protein, while the 4 small subunits are PetG, PetL, PetM and PetN. The complex functions as a dimer.

It localises to the plastid. It is found in the chloroplast thylakoid membrane. Component of the cytochrome b6-f complex, which mediates electron transfer between photosystem II (PSII) and photosystem I (PSI), cyclic electron flow around PSI, and state transitions. PetG is required for either the stability or assembly of the cytochrome b6-f complex. The sequence is that of Cytochrome b6-f complex subunit 5 from Daucus carota (Wild carrot).